A 258-amino-acid polypeptide reads, in one-letter code: Glutathione S-transferase DHAR3, chloroplastic (258 aa).

The transit peptide at 1-42 (MISLRFQPSTTAGVLSASVSRAGFIKRCGSTKPGRVGRFVTM) directs the protein to the chloroplast. S-glutathionyl cysteine is present on cysteine 52. 2 residues coordinate glutathione: lysine 54 and aspartate 65. L-ascorbate-binding residues include lysine 54 and aspartate 65. Positions 56-129 (SITTPNKLGD…DVITQALEEK (74 aa)) constitute a GST N-terminal domain. Cysteine 66 (nucleophile) is an active-site residue. Cysteine 66 and cysteine 69 are disulfide-bonded. A Glutathione-binding motif is present at residues 66–71 (CPFCQK). Residues lysine 93, valine 106, serine 119, histidine 205, and tryptophan 252 each coordinate glutathione. In terms of domain architecture, GST C-terminal spans 130-258 (YPEPPLATPP…IAGWRPKVMG (129 aa)). Position 255 (lysine 255) interacts with L-ascorbate.

It belongs to the GST superfamily. DHAR family. In terms of assembly, monomer. Interacts with TRX3. In terms of processing, partial S-glutathionylation and intramolecular disulfide bond formation between Cys-66 and Cys-69 in the presence of oxidized glutathione (GSSG). Could be reduced by TRX-dependent process.

It localises to the plastid. Its subcellular location is the chloroplast stroma. It catalyses the reaction RX + glutathione = an S-substituted glutathione + a halide anion + H(+). The enzyme catalyses L-dehydroascorbate + 2 glutathione = glutathione disulfide + L-ascorbate. Its function is as follows. Displays a dual function. As a soluble protein, exhibits glutathione-dependent thiol transferase and dehydroascorbate (DHA) reductase activities. Key component of the ascorbate recycling system. Involved in the redox homeostasis, especially in scavenging of ROS under oxidative stresses. This Arabidopsis thaliana (Mouse-ear cress) protein is Glutathione S-transferase DHAR3, chloroplastic (DHAR3).